The chain runs to 107 residues: Bombesin (107 aa).

The first 26 residues, 1–26 (MSAIPLNRILPLGFLLIFSFISLSSC), serve as a signal peptide directing secretion. Positions 27–41 (MEFVEDPNNQGGLNL) are excised as a propeptide. Position 42 is a pyrrolidone carboxylic acid (Gln-42). Met-55 carries the post-translational modification Methionine amide. A propeptide spanning residues 56 to 107 (GKKSLQDTDFEEMESFAKRNVENMKAESERELRHAQLVVRNILEQYLKNMQN) is cleaved from the precursor.

Expressed by the skin glands.

The protein resides in the secreted. Functionally, stimulates smooth muscle contraction. Role in induction of hypothermia, stimulation of DNA replication and release of many gastrointestinal hormones. Possesses insulin-releasing activity. This chain is Bombesin, found in Bombina variegata (Yellow-bellied toad).